A 152-amino-acid chain; its full sequence is Transcriptional regulator MraZ (152 aa).

2 consecutive SpoVT-AbrB domains span residues 5-52 (ASAV…PLNQ) and 81-124 (ATEC…SESE).

Belongs to the MraZ family. Forms oligomers.

It localises to the cytoplasm. The protein localises to the nucleoid. The protein is Transcriptional regulator MraZ of Histophilus somni (strain 2336) (Haemophilus somnus).